Here is a 105-residue protein sequence, read N- to C-terminus: Large ribosomal subunit protein uL24 (105 aa).

Belongs to the universal ribosomal protein uL24 family. Part of the 50S ribosomal subunit.

One of two assembly initiator proteins, it binds directly to the 5'-end of the 23S rRNA, where it nucleates assembly of the 50S subunit. Functionally, one of the proteins that surrounds the polypeptide exit tunnel on the outside of the subunit. The sequence is that of Large ribosomal subunit protein uL24 from Staphylococcus epidermidis (strain ATCC 35984 / DSM 28319 / BCRC 17069 / CCUG 31568 / BM 3577 / RP62A).